A 301-amino-acid chain; its full sequence is Aspartate carbamoyltransferase catalytic subunit (301 aa).

Residues Arg46 and Thr47 each coordinate carbamoyl phosphate. Lys74 serves as a coordination point for L-aspartate. Carbamoyl phosphate contacts are provided by Arg96, His124, and Gln127. The L-aspartate site is built by Arg157 and Arg208. Carbamoyl phosphate-binding residues include Ala249 and Pro250.

It belongs to the aspartate/ornithine carbamoyltransferase superfamily. ATCase family. As to quaternary structure, heterododecamer (2C3:3R2) of six catalytic PyrB chains organized as two trimers (C3), and six regulatory PyrI chains organized as three dimers (R2).

It catalyses the reaction carbamoyl phosphate + L-aspartate = N-carbamoyl-L-aspartate + phosphate + H(+). It participates in pyrimidine metabolism; UMP biosynthesis via de novo pathway; (S)-dihydroorotate from bicarbonate: step 2/3. In terms of biological role, catalyzes the condensation of carbamoyl phosphate and aspartate to form carbamoyl aspartate and inorganic phosphate, the committed step in the de novo pyrimidine nucleotide biosynthesis pathway. The chain is Aspartate carbamoyltransferase catalytic subunit from Bacillus cereus (strain ATCC 14579 / DSM 31 / CCUG 7414 / JCM 2152 / NBRC 15305 / NCIMB 9373 / NCTC 2599 / NRRL B-3711).